Reading from the N-terminus, the 275-residue chain is AA9 family lytic polysaccharide monooxygenase AA9-X282 (275 aa).

The N-terminal stretch at 1-17 is a signal peptide; sequence MFTKLIIAASLAASVAA. His18 contributes to the Cu(2+) binding site. Thr20 is modified (phosphothreonine). Phosphoserine occurs at positions 43 and 49. Thr50 carries the phosphothreonine modification. Ser58 is subject to Phosphoserine. A disulfide bridge links Cys66 with Cys185. Residue His96 coordinates Cu(2+). At Ser130 the chain carries Phosphoserine. O2 is bound by residues His171 and Gln180. Tyr182 provides a ligand contact to Cu(2+). The X282 extension stretch occupies residues 236–265; sequence TSPAVANTPYPTTATWNTALQPSTVPTAVP. Positions 268–275 match the 9res motif motif; it reads GTPGIGKA.

This sequence belongs to the polysaccharide monooxygenase AA9 family. The cofactor is Cu(2+).

Its subcellular location is the secreted. The enzyme catalyses [(1-&gt;4)-beta-D-glucosyl]n+m + reduced acceptor + O2 = 4-dehydro-beta-D-glucosyl-[(1-&gt;4)-beta-D-glucosyl]n-1 + [(1-&gt;4)-beta-D-glucosyl]m + acceptor + H2O.. In terms of biological role, lytic polysaccharide monooxygenase (LPMO) that depolymerizes crystalline and amorphous polysaccharides via the oxidation of scissile alpha- or beta-(1-4)-glycosidic bonds, yielding C1 oxidation products. Catalysis by LPMOs requires the reduction of the active-site copper from Cu(II) to Cu(I) by a reducing agent and H(2)O(2) or O(2) as a cosubstrate. Shows only weak binding properties to cellulose, and low cellulolytic oxidative activity which questions the involvement of X282 extension-containing AA9 proteins in the degradation of plant cell wall and opens new avenues as to the divergence of function of some AA9 members. In Trametes coccinea (strain BRFM310) (Pycnoporus coccineus), this protein is AA9 family lytic polysaccharide monooxygenase AA9-X282.